A 64-amino-acid polypeptide reads, in one-letter code: Sulfur carrier protein ThiS (64 aa).

Gly-64 is modified (1-thioglycine; alternate). Gly-64 is subject to Glycyl adenylate; alternate. Gly-64 is covalently cross-linked (Glycyl cysteine thioester (Gly-Cys) (interchain with C-192 in TtuC); alternate).

The protein belongs to the sulfur carrier protein ThiS family. C-terminal thiocarboxylation occurs in 2 steps, it is first acyl-adenylated (-COAMP) by TtuC, then thiocarboxylated (-COSH) by the cysteine desulfurases IscS or SufS.

It functions in the pathway cofactor biosynthesis; thiamine diphosphate biosynthesis. In terms of biological role, is the sulfur donor in the synthesis of the thiazole phosphate moiety of thiamine phosphate. This chain is Sulfur carrier protein ThiS, found in Thermus thermophilus (strain ATCC BAA-163 / DSM 7039 / HB27).